Here is a 264-residue protein sequence, read N- to C-terminus: Synaptophysin-like protein 2 (264 aa).

Over 1 to 33 the chain is Cytoplasmic; sequence MSSTESPGRTSDKSPRQQVDRLLLGLRWQRLEE. The MARVEL domain occupies 30–238; sequence RLEEPLGFIK…NCWFVFKETP (209 aa). The helical transmembrane segment at 34–54 threads the bilayer; the sequence is PLGFIKVLQWLFAIFAFGSCG. The Vesicular portion of the chain corresponds to 55–116; sequence SYSGETGALV…LMGDFSAPAE (62 aa). Residues 117-137 form a helical membrane-spanning segment; sequence FFVTLGIFSFFYTMAALVIYL. Topologically, residues 138-150 are cytoplasmic; it reads RFHKLYTENKRFP. A helical transmembrane segment spans residues 151–171; that stretch reads LVDFCVTVSFTFFWLVAAAAW. The Vesicular portion of the chain corresponds to 172 to 213; sequence GKGLTDVKGATRPSSLTAAMSVCHGEEAVCSAGATPSMGLAN. Asparagine 213 is a glycosylation site (N-linked (GlcNAc...) asparagine). The helical transmembrane segment at 214 to 234 threads the bilayer; it reads LSVLFGFINFFLWAGNCWFVF. Topologically, residues 235–264 are cytoplasmic; sequence KETPWHGQGQDQGQGPSQESAAEQGAVEKQ. The disordered stretch occupies residues 242 to 264; sequence QGQDQGQGPSQESAAEQGAVEKQ.

The protein belongs to the synaptophysin/synaptobrevin family. Expressed abundantly in skeletal muscle and at lower levels in the kidney.

The protein resides in the membrane. Its function is as follows. Involved in communication between the T-tubular and junctional sarcoplasmic reticulum (SR) membranes. In Mus musculus (Mouse), this protein is Synaptophysin-like protein 2 (Sypl2).